The sequence spans 227 residues: NAD(P)H-hydrate epimerase (227 aa).

A YjeF N-terminal domain is found at 12–221 (SRLVDELAIA…DIGVPRALLE (210 aa)). (6S)-NADPHX is bound at residue 59–63 (NNGGD). 2 residues coordinate K(+): Asn60 and Asp131. Residues 135–141 (GTGATGE) and Asp164 contribute to the (6S)-NADPHX site. Thr167 is a binding site for K(+).

The protein belongs to the NnrE/AIBP family. K(+) serves as cofactor.

The enzyme catalyses (6R)-NADHX = (6S)-NADHX. It catalyses the reaction (6R)-NADPHX = (6S)-NADPHX. Functionally, catalyzes the epimerization of the S- and R-forms of NAD(P)HX, a damaged form of NAD(P)H that is a result of enzymatic or heat-dependent hydration. This is a prerequisite for the S-specific NAD(P)H-hydrate dehydratase to allow the repair of both epimers of NAD(P)HX. This chain is NAD(P)H-hydrate epimerase, found in Pirellula staleyi (strain ATCC 27377 / DSM 6068 / ICPB 4128) (Pirella staleyi).